A 1456-amino-acid chain; its full sequence is ABC-type transporter eriD (1456 aa).

Residues 1-65 (MAENEKVTYG…DPRMDPLSGK (65 aa)) form a disordered region. Positions 30–40 (SMTNASRSSVY) are enriched in polar residues. The ABC transporter 1 domain maps to 118-372 (LDIPGLARDI…FIDMGFECPP (255 aa)). The next 6 membrane-spanning stretches (helical) occupy residues 481-501 (NFLT…SIFY), 515-535 (ALLF…ILQI), 561-581 (VLCD…VLYF), 590-610 (GAFF…SMIF), 623-643 (AMAP…FTIP), and 734-754 (ILFG…EFIA). Positions 775–799 (EGASEDEEAGTGSTGTRTQEEPVDK) are disordered. The ABC transporter 2 domain occupies 813–1056 (FHWEDVIYDI…IIDYFEGQGA (244 aa)). Residue 849-856 (GASGAGKT) coordinates ATP. Transmembrane regions (helical) follow at residues 1148-1168 (YIYS…FSFF), 1184-1204 (VFMG…HFVT), 1233-1253 (LPWN…PVGM), 1269-1289 (LMFL…HMLI), 1301-1321 (IASL…GPSG), 1337-1357 (PFTY…PAFC), and 1423-1443 (FGFL…FYWL).

This sequence belongs to the ABC transporter superfamily. ABCG family. PDR (TC 3.A.1.205) subfamily.

The protein resides in the membrane. In terms of biological role, ABC-type transporter; part of the gene cluster that mediates the biosynthesis of erinacines, cyathane-xylosides that show unique biological activities, including leishmanicidal activity, stimulating activity for nerve growth-factor synthesis, and agonistic activity toward the kappa opioid receptor. The polypeptide is ABC-type transporter eriD (Hericium erinaceus (Lion's mane mushroom)).